The sequence spans 248 residues: 23S rRNA (guanosine-2'-O-)-methyltransferase RlmB (248 aa).

Residues Gly-198, Leu-218, and Leu-227 each contribute to the S-adenosyl-L-methionine site.

It belongs to the class IV-like SAM-binding methyltransferase superfamily. RNA methyltransferase TrmH family. RlmB subfamily.

It is found in the cytoplasm. The enzyme catalyses guanosine(2251) in 23S rRNA + S-adenosyl-L-methionine = 2'-O-methylguanosine(2251) in 23S rRNA + S-adenosyl-L-homocysteine + H(+). Functionally, specifically methylates the ribose of guanosine 2251 in 23S rRNA. This Pseudomonas aeruginosa (strain ATCC 15692 / DSM 22644 / CIP 104116 / JCM 14847 / LMG 12228 / 1C / PRS 101 / PAO1) protein is 23S rRNA (guanosine-2'-O-)-methyltransferase RlmB.